Here is a 118-residue protein sequence, read N- to C-terminus: Large ribosomal subunit protein bL20 (118 aa).

This sequence belongs to the bacterial ribosomal protein bL20 family.

Functionally, binds directly to 23S ribosomal RNA and is necessary for the in vitro assembly process of the 50S ribosomal subunit. It is not involved in the protein synthesizing functions of that subunit. The polypeptide is Large ribosomal subunit protein bL20 (Salmonella arizonae (strain ATCC BAA-731 / CDC346-86 / RSK2980)).